The primary structure comprises 173 residues: dCTP deaminase (173 aa).

DCTP is bound by residues 97 to 102 (RSSFAR) and aspartate 113. The Proton donor/acceptor role is filled by glutamate 123. Positions 155 and 162 each coordinate dCTP.

It belongs to the dCTP deaminase family. Homotrimer.

The enzyme catalyses dCTP + H2O + H(+) = dUTP + NH4(+). The protein operates within pyrimidine metabolism; dUMP biosynthesis; dUMP from dCTP (dUTP route): step 1/2. Functionally, catalyzes the deamination of dCTP to dUTP. The sequence is that of dCTP deaminase from Acidianus ambivalens (Desulfurolobus ambivalens).